A 352-amino-acid polypeptide reads, in one-letter code: CRISPR-associated endonuclease Cas1 1 (352 aa).

Mn(2+) contacts are provided by glutamate 207, histidine 274, and glutamate 289.

This sequence belongs to the CRISPR-associated endonuclease Cas1 family. As to quaternary structure, homodimer, forms a heterotetramer with a Cas2 homodimer. Requires Mg(2+) as cofactor. The cofactor is Mn(2+).

In terms of biological role, CRISPR (clustered regularly interspaced short palindromic repeat), is an adaptive immune system that provides protection against mobile genetic elements (viruses, transposable elements and conjugative plasmids). CRISPR clusters contain spacers, sequences complementary to antecedent mobile elements, and target invading nucleic acids. CRISPR clusters are transcribed and processed into CRISPR RNA (crRNA). Acts as a dsDNA endonuclease. Involved in the integration of spacer DNA into the CRISPR cassette. This Saccharolobus solfataricus (strain ATCC 35092 / DSM 1617 / JCM 11322 / P2) (Sulfolobus solfataricus) protein is CRISPR-associated endonuclease Cas1 1.